Here is a 39-residue protein sequence, read N- to C-terminus: Potassium channel toxin alpha-KTx 2.5 (39 aa).

Disulfide bonds link Cys-7–Cys-29, Cys-13–Cys-34, and Cys-17–Cys-36.

Belongs to the short scorpion toxin superfamily. Potassium channel inhibitor family. Alpha-KTx 02 subfamily. In terms of tissue distribution, expressed by the venom gland.

Its subcellular location is the secreted. Its function is as follows. Potent selective inhibitor of Kv1.1/KCNA1, Kv1.2/KCNA2, Kv1.3/KCNA3 voltage-gated potassium channels. Weak inhibitor of Kv1.6/KCNA6 potassium channel. It also shows a weak interaction with nicotinic acetylcholine receptors (nAChR), suggesting it may weakly inhibit it. This chain is Potassium channel toxin alpha-KTx 2.5, found in Centruroides limbatus (Bark scorpion).